A 209-amino-acid chain; its full sequence is Uridine kinase (209 aa).

Gly12 to Thr19 is a binding site for ATP.

This sequence belongs to the uridine kinase family.

The protein localises to the cytoplasm. It catalyses the reaction uridine + ATP = UMP + ADP + H(+). It carries out the reaction cytidine + ATP = CMP + ADP + H(+). It functions in the pathway pyrimidine metabolism; CTP biosynthesis via salvage pathway; CTP from cytidine: step 1/3. Its pathway is pyrimidine metabolism; UMP biosynthesis via salvage pathway; UMP from uridine: step 1/1. The sequence is that of Uridine kinase from Chloroflexus aurantiacus (strain ATCC 29366 / DSM 635 / J-10-fl).